The sequence spans 316 residues: Acetaldehyde dehydrogenase (316 aa).

Residue 11-14 participates in NAD(+) binding; sequence SGNI. Cys-131 (acyl-thioester intermediate) is an active-site residue. Residues 162-170 and Asn-289 each bind NAD(+); that span reads SAGPGTRAN.

This sequence belongs to the acetaldehyde dehydrogenase family. As to quaternary structure, interacts with MhpE.

It carries out the reaction acetaldehyde + NAD(+) + CoA = acetyl-CoA + NADH + H(+). The protein operates within aromatic compound metabolism; 3-phenylpropanoate degradation. Catalyzes the conversion of acetaldehyde to acetyl-CoA, using NAD(+) and coenzyme A. Is the final enzyme in the meta-cleavage pathway for the degradation of aromatic compounds. The polypeptide is Acetaldehyde dehydrogenase (Klebsiella pneumoniae subsp. pneumoniae (strain ATCC 700721 / MGH 78578)).